A 577-amino-acid chain; its full sequence is Arginine--tRNA ligase (577 aa).

Residues 122–132 (PNVAKEMHVGH) carry the 'HIGH' region motif.

This sequence belongs to the class-I aminoacyl-tRNA synthetase family. Monomer.

The protein resides in the cytoplasm. The catalysed reaction is tRNA(Arg) + L-arginine + ATP = L-arginyl-tRNA(Arg) + AMP + diphosphate. The sequence is that of Arginine--tRNA ligase from Escherichia coli O7:K1 (strain IAI39 / ExPEC).